The following is a 372-amino-acid chain: GDP-mannose 4,6 dehydratase (372 aa).

Residues 1 to 20 are disordered; it reads MAHAPARCPSARGSGDGEMG. Position 2 is an N-acetylalanine (Ala2). NADP(+)-binding positions include 30–35, 55–58, 86–87, 108–112, and Tyr123; these read GITGQD, RRSS, DL, and LGAQS. Residue Thr155 is part of the active site. Residues Glu157 and Tyr179 each act as nucleophile in the active site. NADP(+) is bound by residues Lys183, His209, and Arg214. At Tyr323 the chain carries Phosphotyrosine.

It belongs to the NAD(P)-dependent epimerase/dehydratase family. GDP-mannose 4,6-dehydratase subfamily. NADP(+) is required as a cofactor. In terms of tissue distribution, highly expressed in pancreas and small intestine. Expressed in thymus, protstate, colon, heart, placenta, liver and kidney. Expressed at low levels in spleen, testis, brain and lung.

It catalyses the reaction GDP-alpha-D-mannose = GDP-4-dehydro-alpha-D-rhamnose + H2O. It participates in nucleotide-sugar biosynthesis; GDP-L-fucose biosynthesis via de novo pathway; GDP-L-fucose from GDP-alpha-D-mannose: step 1/2. Its activity is regulated as follows. Inhibited by GDP-fucose. In terms of biological role, catalyzes the conversion of GDP-D-mannose to GDP-4-dehydro-6-deoxy-D-mannose. In Homo sapiens (Human), this protein is GDP-mannose 4,6 dehydratase.